Here is a 146-residue protein sequence, read N- to C-terminus: uncharacterized protein (146 aa).

A helical transmembrane segment spans residues phenylalanine 7–asparagine 27.

The protein belongs to the asfivirus E146L family.

Its subcellular location is the host membrane. It localises to the virion. This is an uncharacterized protein from African swine fever virus (strain Badajoz 1971 Vero-adapted) (Ba71V).